The chain runs to 582 residues: Aspartate--tRNA ligase (582 aa).

E174 lines the L-aspartate pocket. Positions 198–201 are aspartate; the sequence is QITK. R220 lines the L-aspartate pocket. ATP-binding positions include 220–222 and Q229; that span reads RDE. Position 443 (H443) interacts with L-aspartate. E477 is a binding site for ATP. R484 contributes to the L-aspartate binding site. ATP is bound at residue 529–532; it reads GLDR.

The protein belongs to the class-II aminoacyl-tRNA synthetase family. Type 1 subfamily. Homodimer.

It localises to the cytoplasm. It catalyses the reaction tRNA(Asp) + L-aspartate + ATP = L-aspartyl-tRNA(Asp) + AMP + diphosphate. In terms of biological role, catalyzes the attachment of L-aspartate to tRNA(Asp) in a two-step reaction: L-aspartate is first activated by ATP to form Asp-AMP and then transferred to the acceptor end of tRNA(Asp). The polypeptide is Aspartate--tRNA ligase (Streptococcus pyogenes serotype M5 (strain Manfredo)).